The following is a 175-amino-acid chain: Catabolic 3-dehydroquinase (175 aa).

The Proton acceptor role is filled by tyrosine 23. Substrate contacts are provided by asparagine 74, histidine 80, and aspartate 87. Histidine 100 functions as the Proton donor in the catalytic mechanism. Residues 101 to 102 and arginine 111 each bind substrate; that span reads IS.

It belongs to the type-II 3-dehydroquinase family. As to quaternary structure, homododecamer. Adopts a ring-like structure, composed of an arrangement of two hexameric rings stacked on top of one another.

It carries out the reaction 3-dehydroquinate = 3-dehydroshikimate + H2O. It participates in aromatic compound metabolism; 3,4-dihydroxybenzoate biosynthesis; 3,4-dihydroxybenzoate from 3-dehydroquinate: step 1/2. Is involved in the catabolism of quinate. Allows the utilization of quinate as carbon source via the beta-ketoadipate pathway. The chain is Catabolic 3-dehydroquinase from Talaromyces marneffei (strain ATCC 18224 / CBS 334.59 / QM 7333) (Penicillium marneffei).